Reading from the N-terminus, the 354-residue chain is Histidinol-phosphate aminotransferase (354 aa).

Lys-208 is modified (N6-(pyridoxal phosphate)lysine).

It belongs to the class-II pyridoxal-phosphate-dependent aminotransferase family. Histidinol-phosphate aminotransferase subfamily. In terms of assembly, homodimer. It depends on pyridoxal 5'-phosphate as a cofactor.

It carries out the reaction L-histidinol phosphate + 2-oxoglutarate = 3-(imidazol-4-yl)-2-oxopropyl phosphate + L-glutamate. It participates in amino-acid biosynthesis; L-histidine biosynthesis; L-histidine from 5-phospho-alpha-D-ribose 1-diphosphate: step 7/9. The protein is Histidinol-phosphate aminotransferase of Aquifex aeolicus (strain VF5).